Here is a 1580-residue protein sequence, read N- to C-terminus: Transcriptional activator GLI3 (1580 aa).

Met1 is subject to N-acetylmethionine. Composition is skewed to polar residues over residues 1-10 and 58-78; these read MEAQSHSSTT and ITMQ…PSTS. Residues 1–79 are disordered; the sequence is MEAQSHSSTT…KVSEEPSTSS (79 aa). Position 175 is an omega-N-methylarginine (Arg175). Residues 368–475 are disordered; sequence QSLGSAFGHS…DKDESKQEPE (108 aa). A compositionally biased stretch (polar residues) spans 401–427; that stretch reads NPVQVSSGPSESSQNKPTSESAVSSTG. Glycyl lysine isopeptide (Lys-Gly) (interchain with G-Cter in SUMO2) cross-links involve residues Lys438 and Lys462. Basic and acidic residues predominate over residues 461–474; it reads VKEEGDKDESKQEP. C2H2-type zinc fingers lie at residues 480 to 505, 513 to 540, 546 to 570, 576 to 601, and 607 to 632; these read TNCH…NNDH, FVCR…MRRH, HKCT…LRSH, YVCE…NRTH, and YVCK…KTVH. Residues 620–728 are disordered; that stretch reads DPSSLRKHVK…PISNYSNSGL (109 aa). The segment covering 632–648 has biased composition (basic and acidic residues); the sequence is HGPEAHVTKKQRGDIHP. Ser664 bears the Phosphoserine mark. Residues 684–699 show a composition bias toward basic and acidic residues; sequence SKREECLQVKTVKAEK. The span at 703-726 shows a compositional bias: low complexity; that stretch reads SQPSPGGQSSCSSQQSPISNYSNS. A mediates interaction with DZIP1 region spans residues 745–845; it reads DETPIMDSTI…VDVTMLNMLN (101 aa). Lys773 is covalently cross-linked (Glycyl lysine isopeptide (Lys-Gly) (interchain with G-Cter in ubiquitin)). Residue Lys779 forms a Glycyl lysine isopeptide (Lys-Gly) (interchain with G-Cter in SUMO2); alternate linkage. Lys779 participates in a covalent cross-link: Glycyl lysine isopeptide (Lys-Gly) (interchain with G-Cter in ubiquitin); alternate. Glycyl lysine isopeptide (Lys-Gly) (interchain with G-Cter in ubiquitin) cross-links involve residues Lys784 and Lys800. Residues Ser849, Ser865, Ser877, and Ser907 each carry the phosphoserine; by PKA modification. Positions 863 to 882 are enriched in low complexity; sequence RSSGISPCFSSRRSSEASQA. Residues 863–918 form a disordered region; it reads RSSGISPCFSSRRSSEASQAEGRPQNVSVADSYDPISTDASRRSSEASQSDGLPSL. Over residues 908–918 the composition is skewed to polar residues; that stretch reads EASQSDGLPSL. Ser980 and Ser1006 each carry phosphoserine; by PKA. The interval 981–1042 is disordered; it reads DGGAHGYGRR…PAMATSAEKR (62 aa).

Belongs to the GLI C2H2-type zinc-finger protein family. In terms of assembly, the full-length GLI3 form (GLI3FL) interacts with SUFU and this interaction regulates the formation of either repressor or activator forms of GLI3. Its association with SUFU is regulated by Hh signaling and dissociation of the SUFU-GLI3 interaction requires the presence of the ciliary motor KIF3A. Interacts with KIF7. The activator form of GLI3 (GLI3A) but not the repressor form (GLI3R) can interact with TRPS1. The phosphorylated form interacts with BTRC. Interacts with ZIC1. Interacts with ZIC3 (via C2H2-type domains 3, 4 and 5); the interaction enhances its transcriptional activity. Interacts with WRD11; the interaction associates EMX1 with GLI3. Interacts with DZIP1; retains GLI3 within the cytoplasm. Post-translationally, phosphorylated on multiple sites by protein kinase A (PKA) and phosphorylation by PKA primes further phosphorylation by CK1 and GSK3. Phosphorylated by DYRK2 (in vitro). Phosphorylation is essential for its proteolytic processing. In terms of processing, transcriptional repressor GLI3R, a C-terminally truncated form, is generated from the full-length GLI3 protein (GLI3FL/GLI3-190) through proteolytic processing. This process requires PKA-primed phosphorylation of GLI3, ubiquitination of GLI3 and the presence of BTRC. GLI3FL is complexed with SUFU in the cytoplasm and is maintained in a neutral state. Without the Hh signal, the SUFU-GLI3 complex is recruited to cilia, leading to the efficient processing of GLI3FL into GLI3R. GLI3R formation leads to its dissociation from SUFU, allowing it to translocate into the nucleus, and repress Hh target genes. When Hh signaling is initiated, SUFU dissociates from GLI3FL and this has two consequences. First, GLI3R production is halted. Second, free GLI3FL translocates to the nucleus, where it is phosphorylated, destabilized, and converted to a transcriptional activator (GLI3A). Phosphorylated in vitro by ULK3. As to expression, is expressed in a wide variety of normal adult tissues, including lung, colon, spleen, placenta, testis, and myometrium.

Its subcellular location is the nucleus. It localises to the cytoplasm. The protein localises to the cell projection. It is found in the cilium. Its function is as follows. Has a dual function as a transcriptional activator and a repressor of the sonic hedgehog (Shh) pathway, and plays a role in limb development. The full-length GLI3 form (GLI3FL) after phosphorylation and nuclear translocation, acts as an activator (GLI3A) while GLI3R, its C-terminally truncated form, acts as a repressor. A proper balance between the GLI3 activator and the repressor GLI3R, rather than the repressor gradient itself or the activator/repressor ratio gradient, specifies limb digit number and identity. In concert with TRPS1, plays a role in regulating the size of the zone of distal chondrocytes, in restricting the zone of PTHLH expression in distal cells and in activating chondrocyte proliferation. Binds to the minimal GLI-consensus sequence 5'-GGGTGGTC-3'. The protein is Transcriptional activator GLI3 (GLI3) of Homo sapiens (Human).